Reading from the N-terminus, the 76-residue chain is uncharacterized protein (76 aa).

Positions 27–76 (SINNGEGSSVVHRDATAPPTPPVVPTSTLQVPGLQRARTPEPNDPRVANL) are disordered.

This is an uncharacterized protein from Caenorhabditis elegans.